A 300-amino-acid chain; its full sequence is NAD kinase (300 aa).

D75 functions as the Proton acceptor in the catalytic mechanism. NAD(+)-binding positions include 75–76 (DG), 149–150 (ND), R177, D179, 190–195 (TAYALS), A214, and Q248.

It belongs to the NAD kinase family. A divalent metal cation is required as a cofactor.

The protein resides in the cytoplasm. The enzyme catalyses NAD(+) + ATP = ADP + NADP(+) + H(+). In terms of biological role, involved in the regulation of the intracellular balance of NAD and NADP, and is a key enzyme in the biosynthesis of NADP. Catalyzes specifically the phosphorylation on 2'-hydroxyl of the adenosine moiety of NAD to yield NADP. The chain is NAD kinase from Burkholderia pseudomallei (strain K96243).